The chain runs to 958 residues: Glycine dehydrogenase (decarboxylating) 2 (958 aa).

K707 is subject to N6-(pyridoxal phosphate)lysine.

This sequence belongs to the GcvP family. As to quaternary structure, the glycine cleavage system is composed of four proteins: P, T, L and H. Pyridoxal 5'-phosphate serves as cofactor.

It carries out the reaction N(6)-[(R)-lipoyl]-L-lysyl-[glycine-cleavage complex H protein] + glycine + H(+) = N(6)-[(R)-S(8)-aminomethyldihydrolipoyl]-L-lysyl-[glycine-cleavage complex H protein] + CO2. Its function is as follows. The glycine cleavage system catalyzes the degradation of glycine. The P protein binds the alpha-amino group of glycine through its pyridoxal phosphate cofactor; CO(2) is released and the remaining methylamine moiety is then transferred to the lipoamide cofactor of the H protein. This is Glycine dehydrogenase (decarboxylating) 2 (gcvP2) from Pseudomonas aeruginosa (strain ATCC 15692 / DSM 22644 / CIP 104116 / JCM 14847 / LMG 12228 / 1C / PRS 101 / PAO1).